The sequence spans 39 residues: Potassium channel toxin alpha-KTx 2.1 (39 aa).

Disulfide bonds link C7–C29, C13–C34, and C17–C36. Residues 26–34 are interaction with Ca(2+)-activated K(+) channels; the sequence is GAKCMNGKC. N39 is subject to Asparagine amide.

The protein belongs to the short scorpion toxin superfamily. Potassium channel inhibitor family. Alpha-KTx 02 subfamily. Expressed by the venom gland.

The protein resides in the secreted. Functionally, blocks voltage-gated potassium channels (mKv1.1/KCNA1 (Kd&gt;25 nM), rKv1.2/KCNA2 (Kd=2 nM), mKv1.3/KCNA3 (Kd=1 nM), hKv1.5/KCNA5 (Kd&gt;25 nM) and mKv3.1/KCNC1 (Kd&gt;25 nM)) and calcium-activated potassium channels (KCa1.1/KCNMA1 and KCa3.1/KCNN4, Kd&gt;25 nM). The sequence is that of Potassium channel toxin alpha-KTx 2.1 from Centruroides noxius (Mexican scorpion).